The primary structure comprises 319 residues: Ribonuclease Z (319 aa).

Residues H62, H64, D66, H67, H139, D210, and H268 each contribute to the Zn(2+) site. D66 functions as the Proton acceptor in the catalytic mechanism.

The protein belongs to the RNase Z family. In terms of assembly, homodimer. Zn(2+) is required as a cofactor.

The catalysed reaction is Endonucleolytic cleavage of RNA, removing extra 3' nucleotides from tRNA precursor, generating 3' termini of tRNAs. A 3'-hydroxy group is left at the tRNA terminus and a 5'-phosphoryl group is left at the trailer molecule.. Zinc phosphodiesterase, which displays some tRNA 3'-processing endonuclease activity. Probably involved in tRNA maturation, by removing a 3'-trailer from precursor tRNA. This Nostoc punctiforme (strain ATCC 29133 / PCC 73102) protein is Ribonuclease Z.